The sequence spans 324 residues: MVQPAATPVSLPSPTVHRSEHTVTVAAPPEALYALVADVTRWPAVFEPTVHVRHLAREGRTERFEIWAEVNGEIAHWRSRRVLDPVRRYVSFRQEHSRPPVTSMSGGWLFRPLADGRTEIVLRHRFTVADDDPAAVARIEEALDRNSARELGALAALAETGHPVDELVFSFTDTLPLQGAARDAYTFVERAERWAELLPHVAQCGADRAGTGLEQWLEMDTVTADGSTHTTRSARICRAPEWIAYNEQRTPRLVSGHSGEWTFAQTPEGPVATARHTVAVDPSGITEVLGPDATLADARAYLRDALGRNSLATLRHAAEAAQRA.

The tract at residues 1 to 21 (MVQPAATPVSLPSPTVHRSEH) is disordered.

It functions in the pathway antibiotic biosynthesis; granaticin biosynthesis. In terms of biological role, is needed for correct cyclization of the oligoketide leading to isochromanequinone formation. The chain is Granaticin polyketide synthase bifunctional cyclase/dehydratase (gra-orf4) from Streptomyces violaceoruber.